The sequence spans 244 residues: Heat stress transcription factor B-3 (244 aa).

A DNA-binding region spans residues 38–132 (PPPFLVKTYK…LMSNIRRRKS (95 aa)). A hydrophobic repeat HR-A/B region spans residues 173-218 (TSSSFVYTALLDENKCLKNENELLSCELGKTKKKCKQLMELVERYR). The Nuclear localization signal motif lies at 202 to 208 (KTKKKCK). Residues 216 to 244 (RYRGEDEDATDESDDEEDEGLKLFGVKLE) form a disordered region. The span at 220–234 (EDEDATDESDDEEDE) shows a compositional bias: acidic residues. The Nuclear export signal motif lies at 236–243 (LKLFGVKL).

Belongs to the HSF family. Class B subfamily. As to quaternary structure, homotrimer. In terms of processing, exhibits temperature-dependent phosphorylation.

It is found in the cytoplasm. It localises to the nucleus. Transcriptional regulator that specifically binds DNA sequence 5'-AGAAnnTTCT-3' known as heat shock promoter elements (HSE). This is Heat stress transcription factor B-3 (HSFB3) from Arabidopsis thaliana (Mouse-ear cress).